Consider the following 238-residue polypeptide: Heme oxygenase (238 aa).

H17 is a binding site for heme b.

It belongs to the heme oxygenase family.

The protein localises to the plastid. It is found in the chloroplast. It carries out the reaction heme b + 3 reduced [NADPH--hemoprotein reductase] + 3 O2 = biliverdin IXalpha + CO + Fe(2+) + 3 oxidized [NADPH--hemoprotein reductase] + 3 H2O + H(+). Its function is as follows. Catalyzes the opening of the heme ring with the release of iron. Key enzyme in the synthesis of the chromophoric part of the photosynthetic antennae. This Pyropia yezoensis (Susabi-nori) protein is Heme oxygenase (pbsA).